Consider the following 326-residue polypeptide: E3 ubiquitin-protein ligase SINAT3 (326 aa).

A disordered region spans residues 1-44 (MDLDSMDCTSTMDVTDDEEIHQDRHSYASVSKHHHTNNNTTNVN). Residues 63-99 (CPVCTNSMYPPIHQCHNGHTLCSTCKARVHNRCPTCR) form an RING-type zinc finger. The SBD stretch occupies residues 113–306 (VAESLELPCK…KELKLRVTGR (194 aa)). The SIAH-type zinc-finger motif lies at 116–176 (SLELPCKHMS…LVAHLRDDHK (61 aa)). Residues cysteine 121, cysteine 128, histidine 140, cysteine 144, cysteine 151, cysteine 158, histidine 170, and histidine 175 each coordinate Zn(2+).

The protein belongs to the SINA (Seven in absentia) family. In terms of assembly, interacts with SINAT6. Interacts with WAV3. Interacts with FREE1. Interacts with ELC/VPS23A.

The protein resides in the endosome. Its subcellular location is the multivesicular body. The protein localises to the cytoplasmic vesicle. It localises to the autophagosome. It catalyses the reaction S-ubiquitinyl-[E2 ubiquitin-conjugating enzyme]-L-cysteine + [acceptor protein]-L-lysine = [E2 ubiquitin-conjugating enzyme]-L-cysteine + N(6)-ubiquitinyl-[acceptor protein]-L-lysine.. The protein operates within protein modification; protein ubiquitination. In terms of biological role, E3 ubiquitin-protein ligase that mediates ubiquitination and subsequent proteasomal degradation of target proteins. E3 ubiquitin ligases accept ubiquitin from an E2 ubiquitin-conjugating enzyme in the form of a thioester and then directly transfers the ubiquitin to targeted substrates. It probably triggers the ubiquitin-mediated degradation of different substrates. Modulates directly the ubiquitination and proteasomal-dependent degradation of FREE1, a component of the ESCRT-I complex. Modulates directly the ubiquitination and proteasomal-dependent degradation of ELC/VPS23A, a component of the ESCRT-I complex. The polypeptide is E3 ubiquitin-protein ligase SINAT3 (Arabidopsis thaliana (Mouse-ear cress)).